A 626-amino-acid polypeptide reads, in one-letter code: Probable potassium transport system protein Kup (626 aa).

The next 12 helical transmembrane spans lie at 11 to 31 (FLTL…TSPL), 55 to 75 (LSLI…VFVM), 103 to 123 (AWII…GMIT), 140 to 160 (AALS…LFLI), 171 to 191 (LFGP…FVSL), 216 to 236 (LGFA…ALYA), 250 to 270 (WFAV…ALLI), 282 to 302 (LLVP…ATVI), 340 to 360 (IYAP…VLAF), 369 to 389 (AYGL…LVVA), 395 to 415 (WPGL…LSFL), and 422 to 442 (LGDG…VMST).

Belongs to the HAK/KUP transporter (TC 2.A.72) family.

The protein localises to the cell inner membrane. It catalyses the reaction K(+)(in) + H(+)(in) = K(+)(out) + H(+)(out). Functionally, transport of potassium into the cell. Likely operates as a K(+):H(+) symporter. The chain is Probable potassium transport system protein Kup from Methylococcus capsulatus (strain ATCC 33009 / NCIMB 11132 / Bath).